The sequence spans 507 residues: Myocyte-specific enhancer factor 2A (507 aa).

The MADS-box domain occupies 3–57 (RKKIQITRIMDERNRQVTFTKRKFGLMKKAYELSVLCDCEIALIIFNSSNKLFQY). Residues 58–86 (ASTDMDKVLLKYTEYNEPHESGTNSDIVE) constitute a DNA-binding region (mef2-type). Position 59 is a phosphoserine; by CK2 (Ser-59). Phosphoserine occurs at positions 98 and 235. Positions 175-269 (ADSSMLSPPQ…GGGNLGMNSR (95 aa)) are disordered. The span at 209–245 (LSTSDLTVPNGAGSSPVGNGFVNSRASPNLVGTTGAN) shows a compositional bias: polar residues. Residue Lys-249 is modified to N6-acetyllysine. Residue Ser-255 is modified to Phosphoserine. Residues 266–283 (MNSRKPDLRVVIPPSSKG) form a required for interaction with MAPKs region. Positions 289-296 (SEEEELEL) are beta domain. Thr-312 and Thr-319 each carry phosphothreonine; by MAPK7 and MAPK14. Ser-355 carries the phosphoserine; by MAPK7 modification. Positions 390–402 (SNLSINTNQNINI) are enriched in polar residues. The tract at residues 390 to 507 (SNLSINTNQN…KRMRMDAWVT (118 aa)) is disordered. N6-acetyllysine; alternate is present on Lys-403. Lys-403 participates in a covalent cross-link: Glycyl lysine isopeptide (Lys-Gly) (interchain with G-Cter in SUMO); alternate. Ser-408 carries the post-translational modification Phosphoserine; by CDK5. Thr-415 carries the post-translational modification Phosphothreonine. Over residues 423–443 (QPPPPSQAPQPQPPQPQPQPQ) the composition is skewed to pro residues. Residue Ser-453 is modified to Phosphoserine. Residues 453-466 (SPVDSLSSSSSSYD) are compositionally biased toward low complexity. 2 stretches are compositionally biased toward basic and acidic residues: residues 467–477 (GSDREDPRGDF) and 488–507 (NTED…AWVT).

This sequence belongs to the MEF2 family. As to quaternary structure, binds DNA as a homo- or heterodimer. Dimerizes with MEF2D. Interacts with HDAC7. Interacts with PIAS1; the interaction enhances sumoylation. Interacts with HDAC4, HDAC9 and SLC2A4RG. Interacts (via the N-terminal) with MAPK7; the interaction results in the phosphorylation and transcriptional activity of MEF2A. Post-translationally, constitutive phosphorylation on Ser-408 promotes Lys-403 sumoylation thus preventing acetylation at this site. Dephosphorylation on Ser-408 by PPP3CA upon neuron depolarization promotes a switch from sumoylation to acetylation on residue Lys-403 leading to inhibition of dendrite claw differentiation. Phosphorylation on Thr-312 and Thr-319 are the main sites involved in p38 MAPK signaling and activate transcription. Phosphorylated on these sites by MAPK14/p38alpha and MAPK11/p38beta, but not by MAPK13/p38delta nor by MAPK12/p38gamma. Phosphorylation on Ser-408 by CDK5 induced by neurotoxicity inhibits MEF2A transcriptional activation leading to apoptosis of cortical neurons. Phosphorylation on Thr-312, Thr-319 and Ser-355 can be induced by EGF. In terms of processing, sumoylation on Lys-403 is enhanced by PIAS1 and represses transcriptional activity. Phosphorylation on Ser-408 is required for sumoylation. Has no effect on nuclear location nor on DNA binding. Sumoylated with SUMO1 and, to a lesser extent with SUMO2 and SUMO3. PIASx facilitates sumoylation in postsynaptic dendrites in the cerebellar cortex and promotes their morphogenesis. Acetylation on Lys-403 activates transcriptional activity. Acetylated by p300 on several sites in diffentiating myocytes. Acetylation on Lys-4 increases DNA binding and transactivation. Hyperacetylation by p300 leads to enhanced cardiac myocyte growth and heart failure. Post-translationally, proteolytically cleaved on several sites by caspase 3 and caspase 7 following neurotoxicity. Preferentially cleaves the CDK5-mediated hyperphosphorylated form which leads to cortical neuron apoptosis and transcriptional inactivation.

It localises to the nucleus. Functionally, transcriptional activator which binds specifically to the MEF2 element, 5'-YTA[AT](4)TAR-3', found in numerous muscle-specific genes. Also involved in the activation of numerous growth factor- and stress-induced genes. Mediates cellular functions not only in skeletal and cardiac muscle development, but also in neuronal differentiation and survival. Plays diverse roles in the control of cell growth, survival and apoptosis via p38 MAPK signaling in muscle-specific and/or growth factor-related transcription. In cerebellar granule neurons, phosphorylated and sumoylated MEF2A represses transcription of NUR77 promoting synaptic differentiation. Associates with chromatin to the ZNF16 promoter. This chain is Myocyte-specific enhancer factor 2A (MEF2A), found in Sus scrofa (Pig).